The following is a 346-amino-acid chain: MSIVTNGNLNKYFQQIKNLKEEFVKKYNSGESTEEIIGKMRQIHGQAIFEDTRNKFQLAKNNKLNPSDFYNLSVDYCTLANMDKKIRHLEILQFERKHKGYTHKGLDTDKYEINRSLIRSNGPLVGTTQPIQSTQANQISMTGKGTQDPVNKVRPEIRKDDDGVDVISLHNTQTEDVTTRRVNSDVIPTEFNNTMNTQNQSNSNYLNTTEYLTNLSNTEANRLMSDYNNGNYELTDSQKQQGGNHIFEVGKPTVVNFYADWCGYSRQFMPNWEKVRDSVKKKYGERIQLSSLNVGQDTDKVNISKNAGVNGYPTVVIFKDGNTYHKVAGNASADDIVKFIDETMSR.

A Thioredoxin domain is found at 212–345; that stretch reads LTNLSNTEAN…IVKFIDETMS (134 aa).

The protein resides in the virion. The protein is Thioredoxin domain-containing protein R362 of Acanthamoeba polyphaga (Amoeba).